Consider the following 360-residue polypeptide: Phospho-N-acetylmuramoyl-pentapeptide-transferase (360 aa).

A run of 10 helical transmembrane segments spans residues 25–45 (RAILGVLTALGLSMVLGPWVI), 73–93 (TMGGTLILFSIVTATLLWADL), 97–117 (YVLAVLFVTITFGLIGWVDDY), 132–152 (WKYFWQSACGFIVAIALFVTA), 168–188 (VAWQMGVLYVFVTYLMIVGFS), 199–219 (GLAIMPTVMVGSALGVIAYLV), 236–256 (SGELVVYCAALAGAGLGFLWF), 263–283 (VFMGDVGALALGAALGVIAVI), 288–308 (IVFFIMSGIFVMETVSVILQV), and 339–359 (IVRFWIITVILVLFGLATLKI).

This sequence belongs to the glycosyltransferase 4 family. MraY subfamily. Mg(2+) serves as cofactor.

It localises to the cell inner membrane. It carries out the reaction UDP-N-acetyl-alpha-D-muramoyl-L-alanyl-gamma-D-glutamyl-meso-2,6-diaminopimeloyl-D-alanyl-D-alanine + di-trans,octa-cis-undecaprenyl phosphate = di-trans,octa-cis-undecaprenyl diphospho-N-acetyl-alpha-D-muramoyl-L-alanyl-D-glutamyl-meso-2,6-diaminopimeloyl-D-alanyl-D-alanine + UMP. It participates in cell wall biogenesis; peptidoglycan biosynthesis. Functionally, catalyzes the initial step of the lipid cycle reactions in the biosynthesis of the cell wall peptidoglycan: transfers peptidoglycan precursor phospho-MurNAc-pentapeptide from UDP-MurNAc-pentapeptide onto the lipid carrier undecaprenyl phosphate, yielding undecaprenyl-pyrophosphoryl-MurNAc-pentapeptide, known as lipid I. The sequence is that of Phospho-N-acetylmuramoyl-pentapeptide-transferase from Teredinibacter turnerae (strain ATCC 39867 / T7901).